Here is a 350-residue protein sequence, read N- to C-terminus: uncharacterized protein (350 aa).

Disordered stretches follow at residues 1–21 (MDSF…SSLN), 237–266 (NSDV…PISP), and 278–298 (EMST…KKRT). 2 stretches are compositionally biased toward polar residues: residues 10–21 (KPTTATSNSSLN) and 246–259 (EDSS…TKPS). A compositionally biased stretch (basic residues) spans 287–298 (SRSRTPSSKKRT).

It localises to the nucleus. This is an uncharacterized protein from Schizosaccharomyces pombe (strain 972 / ATCC 24843) (Fission yeast).